A 383-amino-acid polypeptide reads, in one-letter code: Protein dyf-4 (383 aa).

The first 16 residues, 1–16 (MKTIWLLLATCIHVFA), serve as a signal peptide directing secretion. The N-linked (GlcNAc...) asparagine glycan is linked to asparagine 64.

Interacts with daf-6. In terms of tissue distribution, expressed in sheath and socket glial cells in both the amphid and phasmid ciliated sensory neurons (at protein level).

Its subcellular location is the secreted. Required for the localization of daf-6 to the socket glial channel and the sheath lumen. In association with daf-6, plays a role in dendrite extension and ciliogenesis to ensure the formation of glial channels in amphid and phasmid ciliated sensory neurons. The sequence is that of Protein dyf-4 from Caenorhabditis elegans.